The chain runs to 126 residues: uncharacterized protein (126 aa).

This is an uncharacterized protein from Methanocaldococcus jannaschii (strain ATCC 43067 / DSM 2661 / JAL-1 / JCM 10045 / NBRC 100440) (Methanococcus jannaschii).